We begin with the raw amino-acid sequence, 391 residues long: NADH-quinone oxidoreductase subunit D (391 aa).

It belongs to the complex I 49 kDa subunit family. As to quaternary structure, NDH-1 is composed of 14 different subunits. Subunits NuoB, C, D, E, F, and G constitute the peripheral sector of the complex.

It localises to the cell inner membrane. The enzyme catalyses a quinone + NADH + 5 H(+)(in) = a quinol + NAD(+) + 4 H(+)(out). NDH-1 shuttles electrons from NADH, via FMN and iron-sulfur (Fe-S) centers, to quinones in the respiratory chain. The immediate electron acceptor for the enzyme in this species is believed to be ubiquinone. Couples the redox reaction to proton translocation (for every two electrons transferred, four hydrogen ions are translocated across the cytoplasmic membrane), and thus conserves the redox energy in a proton gradient. The sequence is that of NADH-quinone oxidoreductase subunit D from Pelagibacter ubique (strain HTCC1062).